Consider the following 877-residue polypeptide: G-protein coupled receptor family C group 6 member A (877 aa).

The first 24 residues, 1-24, serve as a signal peptide directing secretion; that stretch reads MAGLDLSLVLMLSVLAGVREVSLT. The Extracellular portion of the chain corresponds to 25–567; it reads QVNQQGVIAP…EYFEWNSGFA (543 aa). 8 N-linked (GlcNAc...) asparagine glycosylation sites follow: Asn53, Asn99, Asn135, Asn263, Asn310, Asn322, Asn338, and Asn358. Asp388 provides a ligand contact to L-lysine. Residues Asn430, Asn475, Asn484, Asn528, and Asn548 are each glycosylated (N-linked (GlcNAc...) asparagine). A helical transmembrane segment spans residues 568–588; that stretch reads IALLTLAALGILLLISMSALF. Over 589-603 the chain is Cytoplasmic; that stretch reads FWQRNSLVVKAAGGP. A helical transmembrane segment spans residues 604–624; the sequence is LCHLILFSLLGSFISVIFFVG. The Extracellular portion of the chain corresponds to 625–635; that stretch reads EPSNESCRVRQ. Asn628 carries an N-linked (GlcNAc...) asparagine glycan. The chain crosses the membrane as a helical span at residues 636-656; it reads VIFGLSFTLCVSCILVKSLKI. At 657-676 the chain is on the cytoplasmic side; sequence LLAFQMNLELKELLRKLYKP. A helical membrane pass occupies residues 677–697; that stretch reads YVIVCMCMGLQVTICTLWLTL. At 698–720 the chain is on the extracellular side; that stretch reads HRPFIEKVVQPKSILLECNEGSD. A helical transmembrane segment spans residues 721–741; the sequence is LMFGLMLGYIVLLALICFTFA. Topologically, residues 742–755 are cytoplasmic; that stretch reads YKGRKLPQKYNEAK. The helical transmembrane segment at 756–776 threads the bilayer; it reads FITFGMLIYLMAWVIFIPVHV. Over 777–782 the chain is Extracellular; it reads TTSGKY. The chain crosses the membrane as a helical span at residues 783-803; that stretch reads VPAVEVVVILISNYGILSCHF. At 804–877 the chain is on the cytoplasmic side; that stretch reads LPKCYIIIFK…VSVPEIDNVL (74 aa).

It belongs to the G-protein coupled receptor 3 family. In terms of assembly, homodimer; disulfide-linked. Expressed in olfactory epithelium. Also expressed in gills, tongue, lips and palatal organ. Not expressed in brain, kidney, liver, muscle, intestine, ovary and skin. In olfactory epithelium, it is widely expressed over the apical and medial portions of the olfactory sensory neurons, regions that contain olfactory neurons. Expressed in external epithelia, which contains taste buds and solitary chemosensory cells. On gill rakers, it is widely expressed in the surface epithelium, but excluded from taste buds.

It is found in the cell membrane. Functionally, olfactory receptor that is activated by amino acids that act as potent odorants in fish. Most highly activated by basic amino acids such as L-lysine and L-arginine. The sequence is that of G-protein coupled receptor family C group 6 member A (gprc6a) from Carassius auratus (Goldfish).